We begin with the raw amino-acid sequence, 254 residues long: Glutamate racemase (254 aa).

Residues D7–S8 and Y39–G40 each bind substrate. C70 acts as the Proton donor/acceptor in catalysis. N71 to T72 contributes to the substrate binding site. C178 functions as the Proton donor/acceptor in the catalytic mechanism. T179–H180 is a binding site for substrate.

The protein belongs to the aspartate/glutamate racemases family.

The enzyme catalyses L-glutamate = D-glutamate. It participates in cell wall biogenesis; peptidoglycan biosynthesis. Provides the (R)-glutamate required for cell wall biosynthesis. The protein is Glutamate racemase of Aquifex aeolicus (strain VF5).